Consider the following 150-residue polypeptide: Avidin-related protein 6 (150 aa).

An N-terminal signal peptide occupies residues 1–24; that stretch reads MVHATSPLLLLLLLSLALVAPGLS. An Avidin-like domain is found at 26 to 147; sequence RKCSLTGEWD…GYNNFTRQRT (122 aa). A disulfide bond links C28 and C105. N36 and S40 together coordinate biotin. N54 carries N-linked (GlcNAc...) asparagine glycosylation. 3 residues coordinate biotin: Y57, T59, and D63. N93 carries an N-linked (GlcNAc...) asparagine glycan. Biotin-binding residues include S95, S99, and N140. An N-linked (GlcNAc...) asparagine glycan is attached at N141.

The protein belongs to the avidin/streptavidin family. Homotetramer. In terms of processing, glycosylated.

Its subcellular location is the secreted. Functionally, forms a strong non-covalent specific complex with biotin. In Gallus gallus (Chicken), this protein is Avidin-related protein 6 (AVR6).